The sequence spans 154 residues: Large ribosomal subunit protein uL13 (154 aa).

This sequence belongs to the universal ribosomal protein uL13 family. Part of the 50S ribosomal subunit.

Its function is as follows. This protein is one of the early assembly proteins of the 50S ribosomal subunit, although it is not seen to bind rRNA by itself. It is important during the early stages of 50S assembly. The sequence is that of Large ribosomal subunit protein uL13 from Cereibacter sphaeroides (strain ATCC 17025 / ATH 2.4.3) (Rhodobacter sphaeroides).